The primary structure comprises 178 residues: Protein GrpE (178 aa).

Composition is skewed to basic and acidic residues over residues 1-19 (MAKH…KEEA) and 30-42 (SPEK…ANER). Positions 1-42 (MAKHKQEEHPEDVEVKEEAVETAEQAESASPEKSELELANER) are disordered.

This sequence belongs to the GrpE family. In terms of assembly, homodimer.

Its subcellular location is the cytoplasm. Functionally, participates actively in the response to hyperosmotic and heat shock by preventing the aggregation of stress-denatured proteins, in association with DnaK and GrpE. It is the nucleotide exchange factor for DnaK and may function as a thermosensor. Unfolded proteins bind initially to DnaJ; upon interaction with the DnaJ-bound protein, DnaK hydrolyzes its bound ATP, resulting in the formation of a stable complex. GrpE releases ADP from DnaK; ATP binding to DnaK triggers the release of the substrate protein, thus completing the reaction cycle. Several rounds of ATP-dependent interactions between DnaJ, DnaK and GrpE are required for fully efficient folding. The chain is Protein GrpE from Streptococcus sanguinis (strain SK36).